A 400-amino-acid chain; its full sequence is Acetate kinase (400 aa).

Mg(2+) is bound at residue asparagine 10. Lysine 17 is an ATP binding site. A substrate-binding site is contributed by arginine 91. Aspartate 150 (proton donor/acceptor) is an active-site residue. ATP contacts are provided by residues 210-214, 285-287, and 333-337; these read HLGNG, DCR, and GIGEN. Glutamate 387 provides a ligand contact to Mg(2+).

The protein belongs to the acetokinase family. In terms of assembly, homodimer. The cofactor is Mg(2+). Mn(2+) serves as cofactor.

The protein localises to the cytoplasm. It catalyses the reaction acetate + ATP = acetyl phosphate + ADP. The protein operates within metabolic intermediate biosynthesis; acetyl-CoA biosynthesis; acetyl-CoA from acetate: step 1/2. Functionally, catalyzes the formation of acetyl phosphate from acetate and ATP. Can also catalyze the reverse reaction. This is Acetate kinase from Cronobacter sakazakii (strain ATCC BAA-894) (Enterobacter sakazakii).